The sequence spans 315 residues: Aspartate carbamoyltransferase catalytic subunit (315 aa).

Carbamoyl phosphate-binding residues include Arg-65 and Thr-66. Lys-93 provides a ligand contact to L-aspartate. Residues Arg-115, His-143, and Gln-146 each contribute to the carbamoyl phosphate site. 2 residues coordinate L-aspartate: Arg-176 and Arg-231. Carbamoyl phosphate is bound by residues Gly-272 and Pro-273.

Belongs to the aspartate/ornithine carbamoyltransferase superfamily. ATCase family. As to quaternary structure, heterododecamer (2C3:3R2) of six catalytic PyrB chains organized as two trimers (C3), and six regulatory PyrI chains organized as three dimers (R2).

The enzyme catalyses carbamoyl phosphate + L-aspartate = N-carbamoyl-L-aspartate + phosphate + H(+). It functions in the pathway pyrimidine metabolism; UMP biosynthesis via de novo pathway; (S)-dihydroorotate from bicarbonate: step 2/3. In terms of biological role, catalyzes the condensation of carbamoyl phosphate and aspartate to form carbamoyl aspartate and inorganic phosphate, the committed step in the de novo pyrimidine nucleotide biosynthesis pathway. This chain is Aspartate carbamoyltransferase catalytic subunit, found in Hyphomonas neptunium (strain ATCC 15444).